The chain runs to 511 residues: 2-isopropylmalate synthase (511 aa).

Residues 5–267 (IQIFDTTLRD…QTQINLEETK (263 aa)) enclose the Pyruvate carboxyltransferase domain. Mn(2+)-binding residues include Asp-14, His-202, His-204, and Asn-238. A regulatory domain region spans residues 391-511 (KVETLQLQFV…NTKVEEGIHS (121 aa)).

It belongs to the alpha-IPM synthase/homocitrate synthase family. LeuA type 1 subfamily. Homodimer. Requires Mn(2+) as cofactor.

The protein localises to the cytoplasm. The catalysed reaction is 3-methyl-2-oxobutanoate + acetyl-CoA + H2O = (2S)-2-isopropylmalate + CoA + H(+). It functions in the pathway amino-acid biosynthesis; L-leucine biosynthesis; L-leucine from 3-methyl-2-oxobutanoate: step 1/4. In terms of biological role, catalyzes the condensation of the acetyl group of acetyl-CoA with 3-methyl-2-oxobutanoate (2-ketoisovalerate) to form 3-carboxy-3-hydroxy-4-methylpentanoate (2-isopropylmalate). This chain is 2-isopropylmalate synthase, found in Staphylococcus saprophyticus subsp. saprophyticus (strain ATCC 15305 / DSM 20229 / NCIMB 8711 / NCTC 7292 / S-41).